We begin with the raw amino-acid sequence, 1073 residues long: Carbamoyl phosphate synthase large chain (1073 aa).

The carboxyphosphate synthetic domain stretch occupies residues 2 to 403 (PKRTDIKSIL…SLQKALRGLE (402 aa)). Residues R129, R169, G175, G176, E208, L210, E215, G241, I242, H243, Q285, and E299 each coordinate ATP. The 196-residue stretch at 133–328 (DVAMKKIGLE…IAKVAAKLAV (196 aa)) folds into the ATP-grasp 1 domain. Mg(2+) is bound by residues Q285, E299, and N301. Positions 285, 299, and 301 each coordinate Mn(2+). Residues 404-553 (VGATGFDPKV…YSTYEEECEA (150 aa)) are oligomerization domain. Positions 554 to 936 (NPSTDREKIM…AFAKAQLGSN (383 aa)) are carbamoyl phosphate synthetic domain. The region spanning 679–870 (QHAVERLKLK…LAKVAARVMA (192 aa)) is the ATP-grasp 2 domain. ATP is bound by residues R715, H754, L756, E761, G786, V787, H788, S789, Q829, and E841. The Mg(2+) site is built by Q829, E841, and N843. Mn(2+) contacts are provided by Q829, E841, and N843. The MGS-like domain maps to 937–1073 (STMKKHGRAL…SVQEMHAQIK (137 aa)). Residues 937-1073 (STMKKHGRAL…SVQEMHAQIK (137 aa)) are allosteric domain.

This sequence belongs to the CarB family. As to quaternary structure, composed of two chains; the small (or glutamine) chain promotes the hydrolysis of glutamine to ammonia, which is used by the large (or ammonia) chain to synthesize carbamoyl phosphate. Tetramer of heterodimers (alpha,beta)4. It depends on Mg(2+) as a cofactor. The cofactor is Mn(2+).

The catalysed reaction is hydrogencarbonate + L-glutamine + 2 ATP + H2O = carbamoyl phosphate + L-glutamate + 2 ADP + phosphate + 2 H(+). It catalyses the reaction hydrogencarbonate + NH4(+) + 2 ATP = carbamoyl phosphate + 2 ADP + phosphate + 2 H(+). The protein operates within amino-acid biosynthesis; L-arginine biosynthesis; carbamoyl phosphate from bicarbonate: step 1/1. It functions in the pathway pyrimidine metabolism; UMP biosynthesis via de novo pathway; (S)-dihydroorotate from bicarbonate: step 1/3. Large subunit of the glutamine-dependent carbamoyl phosphate synthetase (CPSase). CPSase catalyzes the formation of carbamoyl phosphate from the ammonia moiety of glutamine, carbonate, and phosphate donated by ATP, constituting the first step of 2 biosynthetic pathways, one leading to arginine and/or urea and the other to pyrimidine nucleotides. The large subunit (synthetase) binds the substrates ammonia (free or transferred from glutamine from the small subunit), hydrogencarbonate and ATP and carries out an ATP-coupled ligase reaction, activating hydrogencarbonate by forming carboxy phosphate which reacts with ammonia to form carbamoyl phosphate. The protein is Carbamoyl phosphate synthase large chain of Escherichia coli (strain K12).